Reading from the N-terminus, the 186-residue chain is MIEASKLKAGMTFETADGKLIRVLEASHHKPGKGNTIMRMKLRDVRTGSTFDTSYRPEEKFEQAIIETVPAQYLYKMDDTAYFMNTETYDQYEIPVVNVENELLYILENSDVKIQFYGTEVIGVTVPTTVELTVAETQPSIKGATVTGSGKPATMETGLVVNVPDFIEAGQKLVINTAEGTYVSRA.

The protein belongs to the elongation factor P family.

It is found in the cytoplasm. Its pathway is protein biosynthesis; polypeptide chain elongation. Its function is as follows. Involved in peptide bond synthesis. Stimulates efficient translation and peptide-bond synthesis on native or reconstituted 70S ribosomes in vitro. Probably functions indirectly by altering the affinity of the ribosome for aminoacyl-tRNA, thus increasing their reactivity as acceptors for peptidyl transferase. The chain is Elongation factor P from Streptococcus pneumoniae (strain Hungary19A-6).